The primary structure comprises 156 residues: Putative HTH-type transcriptional regulator YffB (156 aa).

Residues 2–137 (KLSSGWEQSV…SNVSLAQVAD (136 aa)) enclose the HTH rrf2-type domain.

The protein is Putative HTH-type transcriptional regulator YffB (yffB) of Lactococcus lactis subsp. lactis (strain IL1403) (Streptococcus lactis).